The primary structure comprises 595 residues: Threonine dehydratase 2 biosynthetic, chloroplastic (595 aa).

The transit peptide at 1–51 (MEFLCLAPTRSFSTNPKLTKSIPSDHTSTTSRIFTYQNMRGSTMRPLALPL) directs the protein to the chloroplast. K143 carries the post-translational modification N6-(pyridoxal phosphate)lysine. ACT-like domains lie at 420 to 492 (ALLA…NLSH) and 514 to 585 (IFGE…LDNY).

It belongs to the serine/threonine dehydratase family. Homotetramer. Pyridoxal 5'-phosphate serves as cofactor. In terms of processing, proteolytically cleaved by a chymotrypsin-like digestive protease in the midgut of the lepidopteran insects to remove the C-terminal regulatory domain, which allows efficient metabolizing of threonine in the presence of high isoleucine levels in the gut. In terms of tissue distribution, expressed in floral buds, 8-9 mm long flowers 1 to 2 days before anthesis, open flowers and floral organs including sepals, petals, stamens and carpels of 8-9 mm flowers (at protein level). Expressed in very early floral meristems of the anantha. Over 500-fold expression in mature flowers compared to leaves. Expressed in sepals, petals, stamens and carpels of the mature flower. In sepals, mostly expressed in the abaxial mesophyll cells and in petals in parenchymal cells. Not expressed in epidermal or vascular tissues of sepals and petals. In stamens, expressed in parenchymal cells of the connective and lobes, but not expressed in differentiated tissues such as tapetum (TP), stomium (SM), or pollen grains (PG). Not expressed in roots or seeds. High level of expression in immature flower buds, unopened flowers and opened flowers. Not expressed in unstressed leaves, root, stem or petiole.

The protein resides in the plastid. It localises to the chloroplast. It catalyses the reaction L-threonine = 2-oxobutanoate + NH4(+). The enzyme catalyses L-serine = pyruvate + NH4(+). It participates in amino-acid biosynthesis; L-isoleucine biosynthesis; 2-oxobutanoate from L-threonine: step 1/1. With respect to regulation, threonine dehydratase 2 biosynthetic, chloroplastic: Strongly inhibited by 1 mM isoleucine. Processed threonine dehydratase 2: Not inhibited by isoleucine. Not required for normal growth and development of the plant. Functionally, involved in defense against lepidopteran, but not coleopteran herbivore insects. Acts in the insect gut to degrade threonine, which is an essential and limiting nutrient for the growth of lepidopteran larvae. Active against both L-threonine and L-serine. The sequence is that of Threonine dehydratase 2 biosynthetic, chloroplastic from Solanum lycopersicum (Tomato).